The primary structure comprises 169 residues: Small ribosomal subunit protein bS18c (169 aa).

Positions 1 to 61 are disordered; sequence MYTSKQPFLK…RRPRIGPGDR (61 aa). A compositionally biased stretch (basic residues) spans 27 to 55; the sequence is QTFRKSKQTFRKFKQPFRKSKQPFRRRPR.

This sequence belongs to the bacterial ribosomal protein bS18 family. In terms of assembly, part of the 30S ribosomal subunit.

It localises to the plastid. Its subcellular location is the chloroplast. This is Small ribosomal subunit protein bS18c from Agrostis stolonifera (Creeping bentgrass).